The primary structure comprises 187 residues: Peptidyl-tRNA hydrolase (187 aa).

Tyr-14 provides a ligand contact to tRNA. His-19 serves as the catalytic Proton acceptor. TRNA contacts are provided by Tyr-64, Asn-66, and Asn-112.

This sequence belongs to the PTH family. As to quaternary structure, monomer.

The protein localises to the cytoplasm. The catalysed reaction is an N-acyl-L-alpha-aminoacyl-tRNA + H2O = an N-acyl-L-amino acid + a tRNA + H(+). Its function is as follows. Hydrolyzes ribosome-free peptidyl-tRNAs (with 1 or more amino acids incorporated), which drop off the ribosome during protein synthesis, or as a result of ribosome stalling. Catalyzes the release of premature peptidyl moieties from peptidyl-tRNA molecules trapped in stalled 50S ribosomal subunits, and thus maintains levels of free tRNAs and 50S ribosomes. The sequence is that of Peptidyl-tRNA hydrolase from Bdellovibrio bacteriovorus (strain ATCC 15356 / DSM 50701 / NCIMB 9529 / HD100).